The chain runs to 555 residues: Tau-cadinol synthase (555 aa).

The (2E,6E)-farnesyl diphosphate site is built by Arg270, Asp307, Asp311, Arg448, and Asp451. Mg(2+)-binding residues include Asp307 and Asp311. The short motif at 307-311 (DDTYD) is the DDXXD motif element. Mg(2+) contacts are provided by Asp451, Ser455, and Glu459.

It belongs to the terpene synthase family. The cofactor is Mg(2+).

It carries out the reaction (2E,6E)-farnesyl diphosphate + H2O = tau-cadinol + diphosphate. The catalysed reaction is (2E,6E)-farnesyl diphosphate = (+)-gamma-cadinene + diphosphate. The protein operates within secondary metabolite biosynthesis; terpenoid biosynthesis. Functionally, sesquiterpene synthase that catalyzes the formation of sesquiterpenes and sesquiterpenoid alcohols. Converts farnesyl diphosphate (FPP) to tau-cadinol. Converts FPP to gamma-cadinene. Tau-cadinol is the major product. The polypeptide is Tau-cadinol synthase (Lavandula angustifolia (Lavender)).